Consider the following 380-residue polypeptide: Glycerate kinase (380 aa).

The protein belongs to the glycerate kinase type-1 family.

The enzyme catalyses (R)-glycerate + ATP = (2R)-3-phosphoglycerate + ADP + H(+). This is Glycerate kinase (glxK) from Halalkalibacterium halodurans (strain ATCC BAA-125 / DSM 18197 / FERM 7344 / JCM 9153 / C-125) (Bacillus halodurans).